Consider the following 115-residue polypeptide: Succinate dehydrogenase assembly factor 3, mitochondrial (115 aa).

Belongs to the complex I LYR family. SDHAF3 subfamily. In terms of assembly, interacts with sdh2 within an sdh1-sdh2 subcomplex.

The protein localises to the mitochondrion matrix. Its function is as follows. Plays an essential role in the assembly of succinate dehydrogenase (SDH), an enzyme complex (also referred to as respiratory complex II) that is a component of both the tricarboxylic acid (TCA) cycle and the mitochondrial electron transport chain, and which couples the oxidation of succinate to fumarate with the reduction of ubiquinone (coenzyme Q) to ubiquinol. Promotes maturation of the iron-sulfur protein subunit sdh2 of the SDH catalytic dimer, protecting it from the deleterious effects of oxidants. May act together with SDHAF1. The chain is Succinate dehydrogenase assembly factor 3, mitochondrial from Schizosaccharomyces pombe (strain 972 / ATCC 24843) (Fission yeast).